Here is a 622-residue protein sequence, read N- to C-terminus: Microtubule-associated protein 70-1 (622 aa).

Residues methionine 1–proline 27 form a disordered region. A coiled-coil region spans residues aspartate 66 to serine 365. Positions isoleucine 250–threonine 483 are required for targeting to microtubules. 2 disordered regions span residues serine 388–asparagine 512 and alanine 579–glutamine 622. Composition is skewed to polar residues over residues serine 400 to phenylalanine 425 and methionine 432 to serine 453. Composition is skewed to basic and acidic residues over residues alanine 479–proline 501 and alanine 579–alanine 591. Residues aspartate 541–arginine 590 are a coiled coil. Residues serine 594–glutamine 605 show a composition bias toward polar residues.

Belongs to the MAP70 family. As to quaternary structure, interacts with MAP70.5 and itself.

The protein resides in the cytoplasm. It is found in the cytoskeleton. The protein localises to the phragmoplast. Its subcellular location is the spindle. Functionally, plant-specific protein that interact with microtubules. In association with MAP70.5, is essential for the normal banding pattern of secondary cell wall and for the proper development of xylem tracheary elements and wood formation. The chain is Microtubule-associated protein 70-1 (MAP70.1) from Arabidopsis thaliana (Mouse-ear cress).